A 496-amino-acid polypeptide reads, in one-letter code: Glycerol kinase (496 aa).

Threonine 12 serves as a coordination point for ADP. ATP contacts are provided by threonine 12, threonine 13, and serine 14. Threonine 12 provides a ligand contact to sn-glycerol 3-phosphate. Arginine 16 contributes to the ADP binding site. Residues arginine 82, glutamate 83, and tyrosine 134 each coordinate sn-glycerol 3-phosphate. Glycerol is bound by residues arginine 82, glutamate 83, and tyrosine 134. At histidine 230 the chain carries Phosphohistidine; by HPr. Aspartate 244 lines the sn-glycerol 3-phosphate pocket. Glycerol contacts are provided by aspartate 244 and glutamine 245. Residues threonine 266 and glycine 309 each contribute to the ADP site. The ATP site is built by threonine 266, glycine 309, glutamine 313, and glycine 410. Residues glycine 410 and asparagine 414 each coordinate ADP.

This sequence belongs to the FGGY kinase family. Homotetramer and homodimer (in equilibrium). The phosphoenolpyruvate-dependent sugar phosphotransferase system (PTS), including enzyme I, and histidine-containing protein (HPr) are required for the phosphorylation, which leads to the activation of the enzyme.

It catalyses the reaction glycerol + ATP = sn-glycerol 3-phosphate + ADP + H(+). It participates in polyol metabolism; glycerol degradation via glycerol kinase pathway; sn-glycerol 3-phosphate from glycerol: step 1/1. With respect to regulation, activated by phosphorylation and inhibited by fructose 1,6-bisphosphate (FBP). Key enzyme in the regulation of glycerol uptake and metabolism. Catalyzes the phosphorylation of glycerol to yield sn-glycerol 3-phosphate. The sequence is that of Glycerol kinase from Geobacillus kaustophilus (strain HTA426).